The chain runs to 120 residues: Large ribosomal subunit protein eL8 (120 aa).

Belongs to the eukaryotic ribosomal protein eL8 family. Part of the 50S ribosomal subunit. Probably part of the RNase P complex.

It is found in the cytoplasm. Its function is as follows. Multifunctional RNA-binding protein that recognizes the K-turn motif in ribosomal RNA, the RNA component of RNase P, box H/ACA, box C/D and box C'/D' sRNAs. In Methanosarcina acetivorans (strain ATCC 35395 / DSM 2834 / JCM 12185 / C2A), this protein is Large ribosomal subunit protein eL8.